The chain runs to 369 residues: NADH-quinone oxidoreductase subunit H (369 aa).

The next 8 membrane-spanning stretches (helical) occupy residues 20 to 40, 88 to 108, 133 to 153, 179 to 199, 205 to 225, 267 to 287, 293 to 313, and 328 to 348; these read VLLI…AYLV, ICFL…WAVI, IGVL…IIAG, IGLT…GEIV, MPYW…ISSL, ILIN…PLNI, IPGI…FIWI, and LGWK…SGVL.

It belongs to the complex I subunit 1 family. NDH-1 is composed of 14 different subunits. Subunits NuoA, H, J, K, L, M, N constitute the membrane sector of the complex.

The protein resides in the cell inner membrane. The enzyme catalyses a quinone + NADH + 5 H(+)(in) = a quinol + NAD(+) + 4 H(+)(out). Functionally, NDH-1 shuttles electrons from NADH, via FMN and iron-sulfur (Fe-S) centers, to quinones in the respiratory chain. The immediate electron acceptor for the enzyme in this species is believed to be ubiquinone. Couples the redox reaction to proton translocation (for every two electrons transferred, four hydrogen ions are translocated across the cytoplasmic membrane), and thus conserves the redox energy in a proton gradient. This subunit may bind ubiquinone. The chain is NADH-quinone oxidoreductase subunit H from Ehrlichia canis (strain Jake).